The primary structure comprises 430 residues: Probable carboxypeptidase AFLA_037450 (430 aa).

The N-terminal stretch at 1 to 16 (MKSIYSLVLCTALTAA) is a signal peptide. N84 carries an N-linked (GlcNAc...) asparagine glycan. Zn(2+) is bound at residue D156. Residue E188 is the Proton acceptor of the active site. Residue E189 coordinates Zn(2+). N285 is a glycosylation site (N-linked (GlcNAc...) asparagine).

This sequence belongs to the peptidase M20A family. Zn(2+) serves as cofactor.

The protein localises to the secreted. This Aspergillus flavus (strain ATCC 200026 / FGSC A1120 / IAM 13836 / NRRL 3357 / JCM 12722 / SRRC 167) protein is Probable carboxypeptidase AFLA_037450.